A 954-amino-acid chain; its full sequence is Glycine dehydrogenase (decarboxylating) (954 aa).

An N6-(pyridoxal phosphate)lysine modification is found at K706.

It belongs to the GcvP family. The glycine cleavage system is composed of four proteins: P, T, L and H. Pyridoxal 5'-phosphate serves as cofactor.

The enzyme catalyses N(6)-[(R)-lipoyl]-L-lysyl-[glycine-cleavage complex H protein] + glycine + H(+) = N(6)-[(R)-S(8)-aminomethyldihydrolipoyl]-L-lysyl-[glycine-cleavage complex H protein] + CO2. Functionally, the glycine cleavage system catalyzes the degradation of glycine. The P protein binds the alpha-amino group of glycine through its pyridoxal phosphate cofactor; CO(2) is released and the remaining methylamine moiety is then transferred to the lipoamide cofactor of the H protein. The protein is Glycine dehydrogenase (decarboxylating) of Pseudomonas savastanoi pv. phaseolicola (strain 1448A / Race 6) (Pseudomonas syringae pv. phaseolicola (strain 1448A / Race 6)).